Consider the following 549-residue polypeptide: Glucoamylase, intracellular sporulation-specific (549 aa).

Residue W198 participates in substrate binding. D261 serves as the catalytic Proton acceptor. E264 (proton donor) is an active-site residue.

The protein belongs to the glycosyl hydrolase 15 family.

It catalyses the reaction Hydrolysis of terminal (1-&gt;4)-linked alpha-D-glucose residues successively from non-reducing ends of the chains with release of beta-D-glucose.. In Saccharomyces cerevisiae (strain ATCC 204508 / S288c) (Baker's yeast), this protein is Glucoamylase, intracellular sporulation-specific (SGA1).